Here is a 660-residue protein sequence, read N- to C-terminus: Probable E3 ubiquitin ligase complex SCF subunit sconB (660 aa).

Positions 1–13 are enriched in basic and acidic residues; that stretch reads MHNENSVLRDAKE. 2 disordered regions span residues 1–34 and 86–108; these read MHNE…MTPY and LGTG…RRQA. An F-box domain is found at 175–221; it reads IDFITALPPEISFKILSYLDTASLCRAAQVSRGWKCLADDDVVWHRM. WD repeat units follow at residues 340-379, 381-419, 421-457, 459-500, 542-586, 587-626, and 629-660; these read GHTN…RTLT, HTSG…STYT, HLGG…TFLL, GHSD…RTFQ, SQVS…CLRT, FFGH…CERT, and GHSG…SFKN. The interval 521–553 is disordered; the sequence is GHDASHEEDSNASVSGDESPSSQVSCSPTAAFF. Positions 531-548 are enriched in polar residues; sequence NASVSGDESPSSQVSCSP.

The protein belongs to the WD repeat MET30/SCONB/SCON-2 family. Component of the SCF(sconB) E3 ubiquitin ligase complex.

It functions in the pathway protein modification; protein ubiquitination. In terms of biological role, component of the SCF(sconB) E3 ubiquitin ligase complex involved in the regulation of sulfur metabolite repression, probably by mediating the inactivation or degradation of the metR transcription factor. This is Probable E3 ubiquitin ligase complex SCF subunit sconB (sconB) from Talaromyces marneffei (strain ATCC 18224 / CBS 334.59 / QM 7333) (Penicillium marneffei).